Consider the following 519-residue polypeptide: 6-phosphofructo-2-kinase/fructose-2,6-bisphosphatase 2 (519 aa).

Positions 1–17 (MSENSTFSTEDSCNSSY) are enriched in polar residues. A disordered region spans residues 1–22 (MSENSTFSTEDSCNSSYKPHAS). Residue serine 2 is modified to N-acetylserine. The 6-phosphofructo-2-kinase stretch occupies residues 2–251 (SENSTFSTED…VYYLMNIHVH (250 aa)). Serine 32 carries the phosphoserine; by PKA modification. Residue 48-56 (GLPARGKTY) coordinates ATP. Arginine 81 and arginine 105 together coordinate beta-D-fructose 6-phosphate. The active site involves aspartate 131. The beta-D-fructose 6-phosphate site is built by threonine 133 and arginine 139. Cysteine 161 is a catalytic residue. 170–175 (NILEVK) lines the ATP pocket. The beta-D-fructose 6-phosphate site is built by lysine 175, arginine 196, and tyrosine 200. The tract at residues 252 to 519 (PRTIYLCRHG…PKTQVSIPVV (268 aa)) is fructose-2,6-bisphosphatase. Beta-D-fructose 2,6-bisphosphate is bound at residue arginine 259. The active-site Tele-phosphohistidine intermediate is the histidine 260. 2 residues coordinate beta-D-fructose 2,6-bisphosphate: asparagine 266 and glycine 272. Glutamate 329 (proton donor/acceptor) is an active-site residue. Positions 340, 354, 358, 369, 395, and 399 each coordinate beta-D-fructose 2,6-bisphosphate. Residue 351 to 354 (FALR) coordinates ATP. Residues 395-399 (QAVMR) and tyrosine 431 each bind ATP. Residues 448 to 493 (HRDKPTHNFPKSQTPVRMRRNSFTPLSSSNTIRRPRNYSVGSRPLK) are disordered. The span at 456-479 (FPKSQTPVRMRRNSFTPLSSSNTI) shows a compositional bias: polar residues. Serine 469 is subject to Phosphoserine. Threonine 471 is modified (phosphothreonine). Threonine 478 is subject to Phosphothreonine; by PKC. 2 positions are modified to phosphoserine: serine 486 and serine 496. A disordered region spans residues 500-519 (ALDMQEGADQPKTQVSIPVV). Positions 510–519 (PKTQVSIPVV) are enriched in polar residues.

In the C-terminal section; belongs to the phosphoglycerate mutase family. In terms of assembly, homodimer. Forms a heterodimer with PFKFB3. In terms of processing, phosphorylation by AMPK stimulates activity. In terms of tissue distribution, highest levels in kidney; also found in heart, brain, spleen, lung, liver, skeletal muscle and testis.

It carries out the reaction beta-D-fructose 2,6-bisphosphate + H2O = beta-D-fructose 6-phosphate + phosphate. It catalyses the reaction beta-D-fructose 6-phosphate + ATP = beta-D-fructose 2,6-bisphosphate + ADP + H(+). With respect to regulation, phosphorylation results in the activation of the kinase activity. Its function is as follows. Synthesis and degradation of fructose 2,6-bisphosphate. The sequence is that of 6-phosphofructo-2-kinase/fructose-2,6-bisphosphatase 2 (Pfkfb2) from Mus musculus (Mouse).